Here is a 225-residue protein sequence, read N- to C-terminus: 7-cyano-7-deazaguanine synthase (225 aa).

ATP is bound at residue 10–20; sequence LSGGIDSATAA. Zn(2+) is bound by residues C191, C199, C202, and C205.

Belongs to the QueC family. Zn(2+) serves as cofactor.

It carries out the reaction 7-carboxy-7-deazaguanine + NH4(+) + ATP = 7-cyano-7-deazaguanine + ADP + phosphate + H2O + H(+). It functions in the pathway purine metabolism; 7-cyano-7-deazaguanine biosynthesis. In terms of biological role, catalyzes the ATP-dependent conversion of 7-carboxy-7-deazaguanine (CDG) to 7-cyano-7-deazaguanine (preQ(0)). The chain is 7-cyano-7-deazaguanine synthase from Prochlorococcus marinus (strain NATL1A).